The sequence spans 29 residues: Amelogenin-like protein (29 aa).

Serine 16 bears the Phosphoserine mark.

The protein belongs to the amelogenin family.

Its subcellular location is the secreted. It is found in the extracellular space. The protein resides in the extracellular matrix. In terms of biological role, tooth enamel proteins are produced in ameloblasts and play a role in biomineralization. The chain is Amelogenin-like protein (AMEL) from Oryctolagus cuniculus (Rabbit).